We begin with the raw amino-acid sequence, 1512 residues long: Zinc finger protein 608 (1512 aa).

Disordered stretches follow at residues 1–23 (MSVN…YDSG), 46–74 (QKFE…SGAG), 89–237 (QASA…HLYG), 260–295 (VAAA…HRRI), and 417–545 (RFCE…FLDQ). Low complexity-rich tracts occupy residues 51 to 74 (NNST…SGAG) and 151 to 185 (SALG…GSCG). Residues 201–218 (AKRDKDAGKSRKDKHDLL) are compositionally biased toward basic and acidic residues. The span at 220-230 (GHQNGSGSQAP) shows a compositional bias: polar residues. Low complexity predominate over residues 260–270 (VAAAGEVSKSA). The stretch at 278-304 (NSMLVKKEEEEEESHRRIKKLKTEKVD) forms a coiled coil. A Glycyl lysine isopeptide (Lys-Gly) (interchain with G-Cter in SUMO2) cross-link involves residue lysine 283. Phosphoserine is present on residues serine 421 and serine 424. Residues 449–458 (ASFTESRGLQ) show a composition bias toward polar residues. Threonine 481 carries the phosphothreonine modification. Phosphoserine is present on serine 493. Residues 526-535 (NSRSTPTTPQ) are compositionally biased toward polar residues. Residues 553-578 (IDCPHPNCNKKYKHINGLRYHQAHAH) form a C2H2-type zinc finger. 3 disordered regions span residues 622 to 665 (LKAP…KKKG), 713 to 750 (DKEK…PQLI), and 777 to 858 (QATP…KDHL). At serine 627 the chain carries Phosphoserine. A compositionally biased stretch (basic and acidic residues) spans 713–729 (DKEKGKKATNCKTDKNL). Over residues 781–790 (KSPPLKPIQP) the composition is skewed to pro residues. Phosphoserine is present on serine 782. Residues 818–858 (KLKDKEGKETGSPKMDAKLGKLEDSKGASKDLPGHFLKDHL) are compositionally biased toward basic and acidic residues. A Glycyl lysine isopeptide (Lys-Gly) (interchain with G-Cter in SUMO2) cross-link involves residue lysine 880. Serine 895 is modified (phosphoserine). Over residues 925 to 934 (NGAESSAAKT) the composition is skewed to polar residues. Disordered regions lie at residues 925 to 996 (NGAE…HSPY) and 1011 to 1066 (PGQV…HQSV). Residues 960–973 (SKASSPSDIISSKD) show a composition bias toward low complexity. The residue at position 964 (serine 964) is a Phosphoserine. A compositionally biased stretch (polar residues) spans 979–989 (HSSTTAQSSQL). A compositionally biased stretch (basic and acidic residues) spans 1030–1054 (IKKESEEDAEKKDKAEQLDSKKVDH). Residues 1055-1066 (NSASLQPQHQSV) are compositionally biased toward polar residues. Serine 1098 is modified (phosphoserine). The segment at 1117–1192 (QKMAQTGRGD…SQLLSNHQQQ (76 aa)) is disordered. Lysine 1118 participates in a covalent cross-link: Glycyl lysine isopeptide (Lys-Gly) (interchain with G-Cter in SUMO2). A compositionally biased stretch (basic and acidic residues) spans 1125–1145 (GDCERKSELPLKELGKEETKQ). The segment covering 1146 to 1157 (KNMPSATISKAP) has biased composition (polar residues). Glycyl lysine isopeptide (Lys-Gly) (interchain with G-Cter in SUMO2) cross-links involve residues lysine 1176 and lysine 1182. Residues 1183 to 1192 (SQLLSNHQQQ) are compositionally biased toward low complexity. Residues lysine 1199, lysine 1216, lysine 1234, and lysine 1250 each participate in a glycyl lysine isopeptide (Lys-Gly) (interchain with G-Cter in SUMO2) cross-link. The segment at 1220–1335 (DSMKQTGVDP…RGTRVAVSSP (116 aa)) is disordered. Basic and acidic residues predominate over residues 1231–1241 (SRFKQDPDSRT). Basic and acidic residues-rich tracts occupy residues 1253-1276 (DQQK…KTPN) and 1291-1327 (IKEE…DSRG). Glycyl lysine isopeptide (Lys-Gly) (interchain with G-Cter in SUMO2) cross-links involve residues lysine 1292, lysine 1310, and lysine 1414. The interval 1423–1459 (ANQYRSKSPAPVEKATAEREREAERERDRHSPFGQRH) is disordered. The segment covering 1437–1453 (ATAEREREAERERDRHS) has biased composition (basic and acidic residues).

Its function is as follows. Transcription factor, which represses ZNF609 transcription. This Homo sapiens (Human) protein is Zinc finger protein 608 (ZNF608).